Consider the following 282-residue polypeptide: Putative lactoylglutathione lyase (282 aa).

A2 bears the N-acetylalanine mark. 2 VOC domains span residues 17-141 (RFLH…LIQR) and 147-274 (PLCQ…LVDN). H20 contributes to the Zn(2+) binding site. Residue R24 coordinates substrate. E71 contacts Zn(2+). Residues N75 and H89 each contribute to the substrate site. The Zn(2+) site is built by H89 and E137. The active-site Proton donor/acceptor is E137. Position 254–255 (254–255 (LG)) interacts with substrate.

The protein belongs to the glyoxalase I family. Zn(2+) serves as cofactor.

The enzyme catalyses (R)-S-lactoylglutathione = methylglyoxal + glutathione. The protein operates within secondary metabolite metabolism; methylglyoxal degradation; (R)-lactate from methylglyoxal: step 1/2. In terms of biological role, catalyzes the conversion of hemimercaptal, formed from methylglyoxal and glutathione, to S-lactoylglutathione. The chain is Putative lactoylglutathione lyase from Brassica oleracea var. gemmifera (Brussel sprouts).